The primary structure comprises 269 residues: 5'-nucleotidase SurE (269 aa).

Residues Asp-11, Asp-12, Ser-43, and Asn-101 each coordinate a divalent metal cation.

Belongs to the SurE nucleotidase family. The cofactor is a divalent metal cation.

It is found in the cytoplasm. It catalyses the reaction a ribonucleoside 5'-phosphate + H2O = a ribonucleoside + phosphate. Its function is as follows. Nucleotidase that shows phosphatase activity on nucleoside 5'-monophosphates. In Synechococcus sp. (strain CC9605), this protein is 5'-nucleotidase SurE.